The primary structure comprises 371 residues: Flagellar P-ring protein 1 (371 aa).

An N-terminal signal peptide occupies residues 1-19 (MRRALLLAALLACAPPAFA).

The protein belongs to the FlgI family. As to quaternary structure, the basal body constitutes a major portion of the flagellar organelle and consists of four rings (L,P,S, and M) mounted on a central rod.

It is found in the periplasm. It localises to the bacterial flagellum basal body. In terms of biological role, assembles around the rod to form the L-ring and probably protects the motor/basal body from shearing forces during rotation. The sequence is that of Flagellar P-ring protein 1 from Cereibacter sphaeroides (strain ATCC 17023 / DSM 158 / JCM 6121 / CCUG 31486 / LMG 2827 / NBRC 12203 / NCIMB 8253 / ATH 2.4.1.) (Rhodobacter sphaeroides).